The following is a 434-amino-acid chain: FAD-dependent monooxygenase cfoG (434 aa).

The N-terminal stretch at 1-22 (MKSSPGLHIIIVGAGITGLATA) is a signal peptide. FAD is bound at residue E36. Catalysis depends on residues R193 and Y233. FAD-binding residues include D314 and G327.

The protein belongs to the paxM FAD-dependent monooxygenase family. As to quaternary structure, monomer. It depends on FAD as a cofactor.

The protein operates within secondary metabolite biosynthesis; flavonoid biosynthesis. Functionally, monooxygenase; part of the gene cluster that mediates the biosynthesis of chlorflavonin, a fungal flavonoid with acetolactate synthase inhibitory activity. Within the pathway, cfoG is responsible for the hydroxylation of the flavonoid skeleton at position C8. The pathway begins with the PKS-NRPS hybrid synthetase cfoA that uses benzoic acid or p-hydroxybenzoic acid as a starter unit with four rounds of chain elongation using malonyl-CoA to form the chalcone skeleton. Then, a new type of chalcone isomerase, cfoK, catalyzes the conversion of the chalcone into a flavanone by a histidine-mediated oxa-Michael addition mechanism. The desaturation of flavanone to flavone is catalyzed by a new type of flavone synthase, the flavin mononucleotide (FMN)-dependent oxidoreductase cfoJ. Monooxygenases cfoF, cfoG, and P450 cfoH are responsible for the hydroxylation of the flavonoid skeleton at sites C3, C8, and C2', respectively. Like cfoF, the dehydratase cfoI plays also a role in the hydroxylation of position C3. Methyltransferases cfoB, cfoC, and cfoD then catalyze the methylation of C7-OH, C8-OH, and C3-OH, respectively. Finally, the monooxygenase cfoE is responsible for the chlorination of flavonoid at position C3'. The sequence is that of FAD-dependent monooxygenase cfoG from Aspergillus candidus.